Here is a 288-residue protein sequence, read N- to C-terminus: ATP synthase gamma chain (288 aa).

Belongs to the ATPase gamma chain family. F-type ATPases have 2 components, CF(1) - the catalytic core - and CF(0) - the membrane proton channel. CF(1) has five subunits: alpha(3), beta(3), gamma(1), delta(1), epsilon(1). CF(0) has three main subunits: a, b and c.

The protein resides in the cell inner membrane. Functionally, produces ATP from ADP in the presence of a proton gradient across the membrane. The gamma chain is believed to be important in regulating ATPase activity and the flow of protons through the CF(0) complex. In Acidithiobacillus ferrooxidans (strain ATCC 23270 / DSM 14882 / CIP 104768 / NCIMB 8455) (Ferrobacillus ferrooxidans (strain ATCC 23270)), this protein is ATP synthase gamma chain.